We begin with the raw amino-acid sequence, 226 residues long: MPLSNAQLAQTIDHTLLAPDASDAQIRELCRQAAEHRFYSVCVNSANVPLAARELADTGVLVCAVVGFPLGAGLSAAKAFEATVAIAAGAGEIDMVINIGALKSGRADDVKADIDAVHRACGAVPLKVILETGLLTDDEKVRVCEMCRDLGVAFVKTSTGFGHGGATLADVALMRRTVGPVLGVKASGGVRDRAAALAMIEAGATRLGTSSGVAIVTDQDGSASAY.

Asp-94 serves as the catalytic Proton donor/acceptor. Lys-156 (schiff-base intermediate with acetaldehyde) is an active-site residue. Lys-185 functions as the Proton donor/acceptor in the catalytic mechanism.

Belongs to the DeoC/FbaB aldolase family. DeoC type 1 subfamily.

The protein localises to the cytoplasm. The enzyme catalyses 2-deoxy-D-ribose 5-phosphate = D-glyceraldehyde 3-phosphate + acetaldehyde. It participates in carbohydrate degradation; 2-deoxy-D-ribose 1-phosphate degradation; D-glyceraldehyde 3-phosphate and acetaldehyde from 2-deoxy-alpha-D-ribose 1-phosphate: step 2/2. Its function is as follows. Catalyzes a reversible aldol reaction between acetaldehyde and D-glyceraldehyde 3-phosphate to generate 2-deoxy-D-ribose 5-phosphate. This is Deoxyribose-phosphate aldolase from Burkholderia lata (strain ATCC 17760 / DSM 23089 / LMG 22485 / NCIMB 9086 / R18194 / 383).